The sequence spans 288 residues: 4-diphosphocytidyl-2-C-methyl-D-erythritol kinase (288 aa).

The active site involves Lys8. Position 90 to 100 (90 to 100) interacts with ATP; it reads PVGAGLAGGSS. The active site involves Asp132.

This sequence belongs to the GHMP kinase family. IspE subfamily.

It carries out the reaction 4-CDP-2-C-methyl-D-erythritol + ATP = 4-CDP-2-C-methyl-D-erythritol 2-phosphate + ADP + H(+). It participates in isoprenoid biosynthesis; isopentenyl diphosphate biosynthesis via DXP pathway; isopentenyl diphosphate from 1-deoxy-D-xylulose 5-phosphate: step 3/6. Its function is as follows. Catalyzes the phosphorylation of the position 2 hydroxy group of 4-diphosphocytidyl-2C-methyl-D-erythritol. The sequence is that of 4-diphosphocytidyl-2-C-methyl-D-erythritol kinase from Chlamydia trachomatis serovar D (strain ATCC VR-885 / DSM 19411 / UW-3/Cx).